Consider the following 257-residue polypeptide: Major prion protein (257 aa).

Positions 1 to 24 (MVKSHIGGWILVLFVAAWSDIGLC) are cleaved as a signal peptide. Residues 25 to 234 (KKRPKPGGGW…EYEAYAQRGA (210 aa)) are interaction with GRB2, ERI3 and SYN1. A disordered region spans residues 28 to 113 (PKPGGGWNTG…NKPSKPKTNM (86 aa)). Tandem repeats lie at residues 54–62 (PQGGGGWGQ), 63–70 (PHGGGWGQ), 71–78 (PHGGGWGQ), 79–86 (PHGGGWGQ), and 87–95 (PHGGGGWGQ). The segment at 54 to 95 (PQGGGGWGQPHGGGWGQPHGGGWGQPHGGGWGQPHGGGGWGQ) is 5 X 8 AA tandem repeats of P-H-G-G-G-W-G-Q. A compositionally biased stretch (gly residues) spans 55-100 (QGGGGWGQPHGGGWGQPHGGGWGQPHGGGWGQPHGGGGWGQGGGSH). 12 residues coordinate Cu(2+): H64, G65, G66, H72, G73, G74, H80, G81, G82, H88, G90, and G91. The cysteines at positions 183 and 218 are disulfide-linked. Residues N185 and N201 are each glycosylated (N-linked (GlcNAc...) asparagine). A234 carries GPI-anchor amidated alanine lipidation. Positions 235–257 (SVILFSSPPVILLISFLLFLIVG) are cleaved as a propeptide — removed in mature form.

Belongs to the prion family. In terms of assembly, monomer and homodimer. Has a tendency to aggregate into amyloid fibrils containing a cross-beta spine, formed by a steric zipper of superposed beta-strands. Soluble oligomers may represent an intermediate stage on the path to fibril formation. Copper binding may promote oligomerization. Interacts with GRB2, APP, ERI3/PRNPIP and SYN1. Mislocalized cytosolically exposed PrP interacts with MGRN1; this interaction alters MGRN1 subcellular location and causes lysosomal enlargement. Interacts with KIAA1191.

Its subcellular location is the cell membrane. It localises to the golgi apparatus. Its primary physiological function is unclear. Has cytoprotective activity against internal or environmental stresses. May play a role in neuronal development and synaptic plasticity. May be required for neuronal myelin sheath maintenance. May play a role in iron uptake and iron homeostasis. Soluble oligomers are toxic to cultured neuroblastoma cells and induce apoptosis (in vitro). Association with GPC1 (via its heparan sulfate chains) targets PRNP to lipid rafts. Also provides Cu(2+) or Zn(2+) for the ascorbate-mediated GPC1 deaminase degradation of its heparan sulfate side chains. The sequence is that of Major prion protein (PRNP) from Sus scrofa (Pig).